A 596-amino-acid polypeptide reads, in one-letter code: F-box/WD repeat-containing protein 8 (596 aa).

Methionine 1 is subject to N-acetylmethionine. A disordered region spans residues 21–95; that stretch reads QVLRRRRRLE…PDRDAAEPEP (75 aa). Residues 29-43 are compositionally biased toward basic and acidic residues; the sequence is LEAGERRPRRPEAGA. The segment covering 44 to 64 has biased composition (low complexity); it reads RGEPASGYLGLAQGLLEGAGR. Residues 71–91 are compositionally biased toward basic and acidic residues; sequence GRTDRKDVSSRSRSPPDRDAA. 2 positions are modified to phosphoserine: serine 82 and serine 84. Residues 111 to 157 enclose the F-box domain; it reads PFFDVHLPYELAINIFQYLNRRELGLCAQVSKTWKVIAEDEVLWYRL. WD repeat units follow at residues 199-248, 257-297, 298-338, 339-381, 382-427, 428-473, 474-511, and 512-559; these read AVSE…LESE, QPYV…FEHD, ARIQ…SEFE, VQKL…LHYV, YGQP…SKLG, NALG…SAHQ, LGVS…EVHS, and RHPV…AYEF.

Component of the Cul7-RING(FBXW8) complex consisting of CUL7, RBX1, SKP1 and FBXW8; within the complex interacts with CUL7 and SKP1. Interacts with GLMN isoform 1. Interacts with OBSL1, CUL1, CUL2, CCT6B, PFDN5, CCT2, CCT3, CCT6A, CCT7, VBP1, CCDC8, ARF1, TRIP13, PDCD5 and GORASP1. Interacts with MAP4K1/HPK1 (when autophosphorylated). Associated component of the 3M complex. Interacts with POUF51 (when phosphorylated on 'Ser-347'). Post-translationally, phosphorylation at Ser-84 by mTORC2 promotes FBXW8 stabilization, allowing its translocation to the cytosol in response to insulin. In terms of tissue distribution, expressed in placenta and embryonic brain (at protein level).

It localises to the cytoplasm. The protein resides in the perinuclear region. The protein localises to the golgi apparatus. Its subcellular location is the cytosol. It functions in the pathway protein modification; protein ubiquitination. Substrate-recognition component of the Cul7-RING(FBXW8) ubiquitin ligase complex, which mediates the ubiquitination and subsequent proteasomal degradation of target proteins. The Cul7-RING(FBXW8) complex mediates ubiquitination and consequent degradation of GORASP1, acting as a component of the ubiquitin ligase pathway that regulates Golgi morphogenesis and dendrite patterning in brain. Mediates ubiquitination and degradation of IRS1 in a mTOR-dependent manner: the Cul7-RING(FBXW8) complex recognizes and binds IRS1 previously phosphorylated by S6 kinase (RPS6KB1 or RPS6KB2). The Cul7-RING(FBXW8) complex also mediates ubiquitination of MAP4K1/HPK1: recognizes and binds autophosphorylated MAP4K1/HPK1, leading to its degradation, thereby affecting cell proliferation and differentiation. The Cul7-RING(FBXW8) complex also mediates ubiquitination of phosphorylated cyclin-D1 (CCND1). The Cul7-RING(FBXW8) complex is however not a major regulator of CCND1 stability during the G1/S transition. Associated component of the 3M complex, suggesting that it mediates some of 3M complex functions. The sequence is that of F-box/WD repeat-containing protein 8 (Fbxw8) from Rattus norvegicus (Rat).